The following is a 793-amino-acid chain: E3 UFM1-protein ligase 1 (793 aa).

Position 2 is an N-acetylalanine (alanine 2). A mediates interaction with DDRGK1 region spans residues 2–200 (ADAWEEIRRL…RGLFSAITRP (199 aa)). Residues 2-212 (ADAWEEIRRL…VNSLISKYGF (211 aa)) form a required for E3 UFM1-protein ligase activity region. Residues 121-250 (DRLAEEVNDK…KAVFVPDIYS (130 aa)) form an involved in CDK5RAP3-binding region. The interval 200–400 (PTAVNSLISK…NPVHLITEED (201 aa)) is mediates interaction with TRIP4. The interval 407–473 (LESVSTSKKD…SSHTGKKKPE (67 aa)) is disordered. Position 433 is an omega-N-methylarginine (arginine 433). A Phosphoserine modification is found at serine 458. A mediates interaction with CDK5RAP3 region spans residues 490-684 (IQDAPEEFIS…QLKVTEDPAL (195 aa)). Threonine 536 carries the post-translational modification Phosphothreonine.

The protein belongs to the UFL1 family. As to quaternary structure, catalytic component of the UFM1 ribosome E3 ligase (UREL) complex, composed of UFL1, DDRGK1 and CDK5RAP3. Interacts with E2-like enzyme UFC1. Interacts with RELA. Interacts with NBN; promoting recruitment to double-strand breaks following DNA damage. Interacts (when phosphorylated) with YWHAG/14-3-3-gamma; sequestering UFL1 and preventing its association with PDCD1/PD-1 substrate. Ubiquitinated, leading to its degradation by the proteasome. Interaction with CDK5RAP3 protects both proteins against ubiquitination and degradation via the proteasome. In terms of processing, phosphorylation at Thr-536 by AMPK promotes its interaction with YWHAG/14-3-3-gamma, thereby preventing UFL1 association with PDCD1/PD-1 substrate.

It localises to the endoplasmic reticulum membrane. It is found in the cytoplasm. The protein localises to the cytosol. Its subcellular location is the nucleus. The protein resides in the chromosome. In terms of biological role, E3 protein ligase that mediates ufmylation, the covalent attachment of the ubiquitin-like modifier UFM1 to lysine residues on target proteins, and which plays a key role in various processes, such as ribosome recycling, response to DNA damage, interferon response or reticulophagy (also called ER-phagy). Catalyzes ufmylation of many protein, such as CD274/PD-L1, CDK5RAP3, CYB5R3, DDRGK1, EIF6, histone H4, MRE11, P4HB, PDCD1/PD-1, TRIP4, RPN1, RPS20/uS10, RPL10/uL16, RPL26/uL24, SYVN1/HRD1 and TP53/p53. As part of the UREL complex, plays a key role in ribosome recycling by catalyzing mono-ufmylation of RPL26/uL24 subunit of the 60S ribosome. Ufmylation of RPL26/uL24 occurs on free 60S ribosomes following ribosome dissociation: it weakens the junction between post-termination 60S subunits and SEC61 translocons, promoting release and recycling of the large ribosomal subunit from the endoplasmic reticulum membrane. Ufmylation of RPL26/uL24 and subsequent 60S ribosome recycling either take place after normal termination of translation or after ribosome stalling during cotranslational translocation at the endoplasmic reticulum. Involved in reticulophagy in response to endoplasmic reticulum stress by mediating ufmylation of proteins such as CYB5R3 and RPN1, thereby promoting lysosomal degradation of ufmylated proteins. Ufmylation in response to endoplasmic reticulum stress is essential for processes such as hematopoiesis, blood vessel morphogenesis or inflammatory response. Mediates ufmylation of DDRGK1 and CDK5RAP3; the role of these modifications is however unclear: as both DDRGK1 and CDK5RAP3 act as substrate adapters for ufmylation, it is uncertain whether ufmylation of these proteins is, a collateral effect or is required for ufmylation. Acts as a negative regulator of T-cell activation by mediating ufmylation and stabilization of PDCD1/PD-1. Also involved in the response to DNA damage: recruited to double-strand break sites following DNA damage and mediates monoufmylation of histone H4 and ufmylation of MRE11. Mediates ufmylation of TP53/p53, promoting its stability. Catalyzes ufmylation of TRIP4, thereby playing a role in nuclear receptor-mediated transcription. Required for hematopoietic stem cell function and hematopoiesis. The protein is E3 UFM1-protein ligase 1 of Macaca fascicularis (Crab-eating macaque).